Consider the following 359-residue polypeptide: Innexin inx2 (359 aa).

At 1-22 the chain is on the cytoplasmic side; that stretch reads MFDVFGSVKGLLKLDSVCIDNN. Residues 23-43 traverse the membrane as a helical segment; the sequence is LFRLHYKATVIILIAFSLLVT. The Extracellular segment spans residues 44 to 109; the sequence is SRQYIGDPID…KDEVKYHKYY (66 aa). Residues 110–130 form a helical membrane-spanning segment; sequence QWVCFVLFFQAILFYIPRYLW. Over 131–180 the chain is Cytoplasmic; it reads KTWEGGRIKMLVLDLNSPVVNEQSKADRKKLLVDYFATNLHTQNFYAYRF. Residues 181–201 traverse the membrane as a helical segment; that stretch reads FICEALNFVNVVGQIYFMDLF. The Extracellular portion of the chain corresponds to 202 to 266; that stretch reads LDGEFTTYGS…VLPLNIVNEK (65 aa). Residues 267-287 form a helical membrane-spanning segment; that stretch reads IYVFLWFWFVILSVLTGIGLV. Over 288–359 the chain is Cytoplasmic; it reads YRLATAMGPQ…AKKLEGKEIV (72 aa).

This sequence belongs to the pannexin family. Widespread expression in embryo, in anterior and posterior row of neural precursors, midline precursors and in epithelial sheet of stomodeum.

Its subcellular location is the cell membrane. It is found in the cell junction. The protein localises to the gap junction. Its function is as follows. Structural components of the gap junctions. The polypeptide is Innexin inx2 (inx2) (Schistocerca americana (American grasshopper)).